Reading from the N-terminus, the 407-residue chain is Probable tRNA sulfurtransferase (407 aa).

The region spanning 61–165 (NEITYRLSKI…LDAIYMYEEV (105 aa)) is the THUMP domain. Residues 183–184 (ML), 208–209 (HF), Arg-265, Gly-287, and Gln-296 contribute to the ATP site.

This sequence belongs to the ThiI family.

It localises to the cytoplasm. It catalyses the reaction [ThiI sulfur-carrier protein]-S-sulfanyl-L-cysteine + a uridine in tRNA + 2 reduced [2Fe-2S]-[ferredoxin] + ATP + H(+) = [ThiI sulfur-carrier protein]-L-cysteine + a 4-thiouridine in tRNA + 2 oxidized [2Fe-2S]-[ferredoxin] + AMP + diphosphate. It carries out the reaction [ThiS sulfur-carrier protein]-C-terminal Gly-Gly-AMP + S-sulfanyl-L-cysteinyl-[cysteine desulfurase] + AH2 = [ThiS sulfur-carrier protein]-C-terminal-Gly-aminoethanethioate + L-cysteinyl-[cysteine desulfurase] + A + AMP + 2 H(+). It functions in the pathway cofactor biosynthesis; thiamine diphosphate biosynthesis. Its function is as follows. Catalyzes the ATP-dependent transfer of a sulfur to tRNA to produce 4-thiouridine in position 8 of tRNAs, which functions as a near-UV photosensor. Also catalyzes the transfer of sulfur to the sulfur carrier protein ThiS, forming ThiS-thiocarboxylate. This is a step in the synthesis of thiazole, in the thiamine biosynthesis pathway. The sulfur is donated as persulfide by IscS. In Staphylococcus aureus (strain bovine RF122 / ET3-1), this protein is Probable tRNA sulfurtransferase.